The chain runs to 256 residues: Aspirochlorine biosynthesis protein F (256 aa).

The N-linked (GlcNAc...) asparagine glycan is linked to Asn19. The next 3 membrane-spanning stretches (helical) occupy residues 21–41 (SITP…GPHF), 163–183 (LVWV…FFFT), and 214–234 (FGLG…ILAV).

The protein localises to the membrane. Its pathway is mycotoxin biosynthesis. Its function is as follows. Part of the gene cluster that mediates the biosynthesis of aspirochlorine (or antibiotic A30641), an unusual halogenated spiro compound with distinctive antifungal properties due to selective inhibition of protein biosynthesis, and which is also active against bacteria, viruses, and murine tumor cells. The non-ribosomal peptide synthetase (NRPS) aclP is responsible the formation of the diketopiperazine (DKP) core from the condensation of 2 phenylalanine residues. One Phe residue is tailored into chlorotyrosine by hydroxylation and chlorination, whereas the second Phe undergoes an unprecedented C-C bond cleavage to be converted into glycine. After formation of the DKP, sulfur is incorporated into the DKP by conjugation with glutathione by aclG, followed by its stepwise degradation to the thiol by aclI, aclJ and aclK, and the dithiol oxidation by aclT. In addition, oxygenases (aclB, aclC, aclL and aclO) and O-methyltransferases (aclM and aclU) act as tailoring enzymes to produce the intermediate dechloroaspirochlorine. Ultimately, chlorination of dechloroaspirochlorine by the halogenase aclH is the last step in the aspirochlorine pathway. The sequence is that of Aspirochlorine biosynthesis protein F from Aspergillus oryzae (strain ATCC 42149 / RIB 40) (Yellow koji mold).